The sequence spans 238 residues: MEYAMKSLSLLYPKSLSRHVSVRTSVVTQQLLSEPSPKAPRARPCRVSTADRSVRKGIMAYSLEDLLLKVRDTLMLADKPFFLVLEEDGTTVETEEYFQALAGDTVFMVLQKGQKWQPPSEQGTRHPLSLSHKPAKKIDVARVTFDLYKLNPQDFIGCLNVKATFYDTYSLSYDLHCCGAKRIMKEAFRWALFSMQATGHVLLGTSCYLQQLLDATEEGQPPKGKASSLIPTCLKILQ.

Residues 1–35 form a required for liquid-liquid phase separation (LLPS) region; it reads MEYAMKSLSLLYPKSLSRHVSVRTSVVTQQLLSEP. The CIDE-N domain maps to 41–118; it reads RARPCRVSTA…VLQKGQKWQP (78 aa).

This sequence belongs to the CIDE family. Homodimer. Homooligomer; undergoes liquid-liquid phase separation (LLPS) via its N-terminus, facilitating lipid droplet fusion, occurs at the lipid droplet contact sites. Interacts with CIDEA. Interacts with PLIN1. Interacts with NFAT5; this interaction is direct and retains NFAT5 in the cytoplasm. Interacts with CEBPB. Interacts with isoform CLSTN3beta of CLSTN3; inhibiting the lipid transferase activity of CIDEC. Post-translationally, ubiquitinated and targeted to proteasomal degradation, resulting in a short half-life (about 15 minutes in 3T3-L1 cells). Protein stability depends on triaclyglycerol synthesis, fatty acid availability and lipid droplet formation. As to expression, expressed mainly in adipose tissue, small intestine, heart, colon and stomach and, at lower levels, in brain, kidney and liver.

It is found in the lipid droplet. It localises to the endoplasmic reticulum. Its subcellular location is the nucleus. The catalysed reaction is a triacyl-sn-glycerol(in) = a triacyl-sn-glycerol(out). Its function is as follows. Lipid transferase specifically expressed in white adipose tissue, which promotes unilocular lipid droplet formation by mediating lipid droplet fusion. Lipid droplet fusion promotes their enlargement, restricting lipolysis and favoring lipid storage. Localizes on the lipid droplet surface, at focal contact sites between lipid droplets, and mediates atypical lipid droplet fusion by undergoing liquid-liquid phase separation (LLPS) and promoting directional net neutral lipid transfer from the smaller to larger lipid droplets. The transfer direction may be driven by the internal pressure difference between the contacting lipid droplet pair. Its role in neutral lipid transfer and lipid droplet enlargement is activated by the interaction with PLIN1. May also act as a CEBPB coactivator in the white adipose tissue to control the expression of a subset of CEBPB downstream target genes, including SOCS1, SOCS3, TGFB1, TGFBR1, ID2 and XDH. When overexpressed in preadipocytes, induces apoptosis or increases cell susceptibility to apoptosis induced by serum deprivation or TGFB treatment. This Homo sapiens (Human) protein is Lipid transferase CIDEC.